The primary structure comprises 431 residues: tRNA(Ile)-lysidine synthase (431 aa).

26 to 31 (SGGVDS) is a binding site for ATP.

This sequence belongs to the tRNA(Ile)-lysidine synthase family.

The protein resides in the cytoplasm. The enzyme catalyses cytidine(34) in tRNA(Ile2) + L-lysine + ATP = lysidine(34) in tRNA(Ile2) + AMP + diphosphate + H(+). In terms of biological role, ligates lysine onto the cytidine present at position 34 of the AUA codon-specific tRNA(Ile) that contains the anticodon CAU, in an ATP-dependent manner. Cytidine is converted to lysidine, thus changing the amino acid specificity of the tRNA from methionine to isoleucine. This Wolbachia pipientis wMel protein is tRNA(Ile)-lysidine synthase.